A 141-amino-acid polypeptide reads, in one-letter code: Hemoglobin subunit alpha (141 aa).

Positions 1-141 (VLSPADKTNI…VSTVLTSKYR (141 aa)) constitute a Globin domain. At Ser3 the chain carries Phosphoserine. N6-succinyllysine is present on Lys7. Residue Thr8 is modified to Phosphothreonine. N6-succinyllysine is present on Lys11. At Lys16 the chain carries N6-acetyllysine; alternate. An N6-succinyllysine; alternate modification is found at Lys16. Residue Tyr24 is modified to Phosphotyrosine. The residue at position 35 (Ser35) is a Phosphoserine. At Lys40 the chain carries N6-succinyllysine. Phosphoserine is present on Ser49. Position 58 (His58) interacts with O2. Position 87 (His87) interacts with heme b. Ser102 is subject to Phosphoserine. Thr108 is subject to Phosphothreonine. Ser124 bears the Phosphoserine mark. Phosphothreonine is present on residues Thr134 and Thr137. Ser138 is subject to Phosphoserine.

It belongs to the globin family. As to quaternary structure, heterotetramer of two alpha chains and two beta chains. Red blood cells.

Involved in oxygen transport from the lung to the various peripheral tissues. In terms of biological role, hemopressin acts as an antagonist peptide of the cannabinoid receptor CNR1. Hemopressin-binding efficiently blocks cannabinoid receptor CNR1 and subsequent signaling. This is Hemoglobin subunit alpha (HBA) from Chrysocyon brachyurus (Maned wolf).